A 134-amino-acid polypeptide reads, in one-letter code: Protein PsiE homolog (134 aa).

4 consecutive transmembrane segments (helical) span residues 14–34 (LQWILNIALIILSIVLSIFLI), 56–76 (VESIIVYFLYFEFIALIIKYF), 82–102 (FPLRYFIYIGITALIRLIIVS), and 106–126 (PMETLLYAGAILVLVIALYIS).

It belongs to the PsiE family.

Its subcellular location is the cell membrane. The polypeptide is Protein PsiE homolog (Bacillus anthracis).